Consider the following 406-residue polypeptide: Cysteine desulfurase (406 aa).

At K226 the chain carries N6-(pyridoxal phosphate)lysine. C364 (cysteine persulfide intermediate) is an active-site residue.

The protein belongs to the class-V pyridoxal-phosphate-dependent aminotransferase family. Csd subfamily. In terms of assembly, homodimer. Interacts with SufE and the SufBCD complex composed of SufB, SufC and SufD. The interaction with SufE is required to mediate the direct transfer of the sulfur atom from the S-sulfanylcysteine. Requires pyridoxal 5'-phosphate as cofactor.

The protein localises to the cytoplasm. The catalysed reaction is (sulfur carrier)-H + L-cysteine = (sulfur carrier)-SH + L-alanine. It catalyses the reaction L-selenocysteine + AH2 = hydrogenselenide + L-alanine + A + H(+). It participates in cofactor biosynthesis; iron-sulfur cluster biosynthesis. Its function is as follows. Cysteine desulfurases mobilize the sulfur from L-cysteine to yield L-alanine, an essential step in sulfur metabolism for biosynthesis of a variety of sulfur-containing biomolecules. Component of the suf operon, which is activated and required under specific conditions such as oxidative stress and iron limitation. Acts as a potent selenocysteine lyase in vitro, that mobilizes selenium from L-selenocysteine. Selenocysteine lyase activity is however unsure in vivo. In Shigella flexneri, this protein is Cysteine desulfurase (sufS).